We begin with the raw amino-acid sequence, 657 residues long: UvrABC system protein B (657 aa).

The 388-residue stretch at Lys29–Leu416 folds into the Helicase ATP-binding domain. Gly42–Thr49 is an ATP binding site. Positions Tyr95–Val118 match the Beta-hairpin motif. In terms of domain architecture, Helicase C-terminal spans Gln435–Ile597. In terms of domain architecture, UVR spans Ala615–Gln650.

This sequence belongs to the UvrB family. As to quaternary structure, forms a heterotetramer with UvrA during the search for lesions. Interacts with UvrC in an incision complex.

The protein localises to the cytoplasm. The UvrABC repair system catalyzes the recognition and processing of DNA lesions. A damage recognition complex composed of 2 UvrA and 2 UvrB subunits scans DNA for abnormalities. Upon binding of the UvrA(2)B(2) complex to a putative damaged site, the DNA wraps around one UvrB monomer. DNA wrap is dependent on ATP binding by UvrB and probably causes local melting of the DNA helix, facilitating insertion of UvrB beta-hairpin between the DNA strands. Then UvrB probes one DNA strand for the presence of a lesion. If a lesion is found the UvrA subunits dissociate and the UvrB-DNA preincision complex is formed. This complex is subsequently bound by UvrC and the second UvrB is released. If no lesion is found, the DNA wraps around the other UvrB subunit that will check the other stand for damage. This Mycoplasma pneumoniae (strain ATCC 29342 / M129 / Subtype 1) (Mycoplasmoides pneumoniae) protein is UvrABC system protein B.